Here is a 380-residue protein sequence, read N- to C-terminus: Cytochrome b (380 aa).

4 helical membrane-spanning segments follow: residues 33–53 (FGSL…FLAM), 77–98 (WLIR…YLHI), 113–133 (WNIG…GYVL), and 178–198 (FFAF…IHLI). Residues His-83 and His-97 each contribute to the heme b site. The heme b site is built by His-182 and His-196. His-201 is a binding site for a ubiquinone. The next 4 membrane-spanning stretches (helical) occupy residues 226-246 (YKDL…ALFS), 288-308 (LGGV…PVLH), 320-340 (FSQF…WIGG), and 347-367 (FIII…ILVP).

The protein belongs to the cytochrome b family. As to quaternary structure, the cytochrome bc1 complex contains 3 respiratory subunits (MT-CYB, CYC1 and UQCRFS1), 2 core proteins (UQCRC1 and UQCRC2) and probably 6 low-molecular weight proteins. The cofactor is heme b.

It localises to the mitochondrion inner membrane. Its function is as follows. Component of the ubiquinol-cytochrome c reductase complex (complex III or cytochrome b-c1 complex) that is part of the mitochondrial respiratory chain. The b-c1 complex mediates electron transfer from ubiquinol to cytochrome c. Contributes to the generation of a proton gradient across the mitochondrial membrane that is then used for ATP synthesis. This chain is Cytochrome b (mt-cyb), found in Astronotus ocellatus (Oscar).